The chain runs to 105 residues: MIASKFGIGQQVRHTLLGYLGVIVDVDPEYSLAEPEEDEIAANDELRAAPWYHVVMEDDDGQPIHTYLAEAQLSSETRDEHPEQPSLDELAKTIRQQLQAPRLRN.

It belongs to the HspQ family.

The protein localises to the cytoplasm. Its function is as follows. Involved in the degradation of certain denaturated proteins, including DnaA, during heat shock stress. The chain is Heat shock protein HspQ from Klebsiella pneumoniae (strain 342).